The sequence spans 413 residues: Clamp protein VP6 (413 aa).

This sequence belongs to the reoviridae clamp protein family. Interacts with capsid proteins VP3, VP4 and VP7.

The protein localises to the virion. In terms of biological role, located at the interface of the incomplete T=13 outer capsid and the pseudo T=2 inner capsid, 120 VP6 subunits clamp and stabilize the inner capsid shell. This Ctenopharyngodon idella (Grass carp) protein is Clamp protein VP6 (S8).